The sequence spans 237 residues: Lectin alpha chain (237 aa).

Mn(2+) is bound by residues E8 and D10. Residues D10, Y12, N14, and D19 each contribute to the Ca(2+) site. Residues Y12 and N14 each contribute to the a carbohydrate site. D19 and H24 together coordinate Mn(2+). 99–100 provides a ligand contact to a carbohydrate; it reads LY. Residue D208 coordinates Ca(2+). R228 contacts a carbohydrate.

Belongs to the leguminous lectin family. Homodimer and homotetramer. Oligomerization is pH-dependent with homotetramers forming at pH 4 and above.

In terms of biological role, D-mannose/D-glucose-binding lectin. Has anti-inflammatory activity in animal models when applied intravenously. Has antinociceptive activity in mice when applied intravenously. This Canavalia boliviana protein is Lectin alpha chain.